A 196-amino-acid polypeptide reads, in one-letter code: RNA polymerase II subunit B1 CTD phosphatase RTR2 (196 aa).

The RTR1-type zinc-finger motif lies at 52–123 (YLARLLSPMS…LSQTPLHERR (72 aa)). Zn(2+) contacts are provided by Cys75, Cys80, Cys99, and His103.

It belongs to the RPAP2 family.

Its subcellular location is the cytoplasm. The protein resides in the nucleus. The catalysed reaction is O-phospho-L-seryl-[protein] + H2O = L-seryl-[protein] + phosphate. It carries out the reaction O-phospho-L-threonyl-[protein] + H2O = L-threonyl-[protein] + phosphate. Its function is as follows. Probable RNA polymerase II subunit B1 C-terminal domain (CTD) phosphatase that regulates RNA polymerase II transcription. May have functional redundancy with RTR1. This is RNA polymerase II subunit B1 CTD phosphatase RTR2 (RTR2) from Saccharomyces cerevisiae (strain ATCC 204508 / S288c) (Baker's yeast).